Here is a 156-residue protein sequence, read N- to C-terminus: CRIB domain-containing protein RIC11 (156 aa).

The region spanning Ile-26–Gly-39 is the CRIB domain. The segment at Gln-87–Ala-156 is disordered. Basic residues predominate over residues Ile-109–Pro-120. Over residues Ser-121 to Lys-142 the composition is skewed to low complexity.

Functionally, functions as a downstream effector of Rho-related GTP binding proteins of the 'Rho of Plants' (ROPs) family. Participates in the propagation of ROP GTPase signals in specific cellular responses. The polypeptide is CRIB domain-containing protein RIC11 (RIC11) (Arabidopsis thaliana (Mouse-ear cress)).